The following is a 155-amino-acid chain: Interleukin-2 (155 aa).

The N-terminal stretch at 1–20 is a signal peptide; it reads MYKIQLLSCIALTLALVANG. The O-linked (GalNAc...) threonine glycan is linked to T23. Residues C79 and C127 are joined by a disulfide bond.

It belongs to the IL-2 family.

Its subcellular location is the secreted. In terms of biological role, cytokine produced by activated CD4-positive helper T-cells and to a lesser extend activated CD8-positive T-cells and natural killer (NK) cells that plays pivotal roles in the immune response and tolerance. Binds to a receptor complex composed of either the high-affinity trimeric IL-2R (IL2RA/CD25, IL2RB/CD122 and IL2RG/CD132) or the low-affinity dimeric IL-2R (IL2RB and IL2RG). Interaction with the receptor leads to oligomerization and conformation changes in the IL-2R subunits resulting in downstream signaling starting with phosphorylation of JAK1 and JAK3. In turn, JAK1 and JAK3 phosphorylate the receptor to form a docking site leading to the phosphorylation of several substrates including STAT5. This process leads to activation of several pathways including STAT, phosphoinositide-3-kinase/PI3K and mitogen-activated protein kinase/MAPK pathways. Functions as a T-cell growth factor and can increase NK-cell cytolytic activity as well. Promotes strong proliferation of activated B-cells and subsequently immunoglobulin production. Plays a pivotal role in regulating the adaptive immune system by controlling the survival and proliferation of regulatory T-cells, which are required for the maintenance of immune tolerance. Moreover, participates in the differentiation and homeostasis of effector T-cell subsets, including Th1, Th2, Th17 as well as memory CD8-positive T-cells. This is Interleukin-2 (IL2) from Bubalus bubalis (Domestic water buffalo).